We begin with the raw amino-acid sequence, 133 residues long: ATP synthase epsilon chain (133 aa).

It belongs to the ATPase epsilon chain family. As to quaternary structure, F-type ATPases have 2 components, CF(1) - the catalytic core - and CF(0) - the membrane proton channel. CF(1) has five subunits: alpha(3), beta(3), gamma(1), delta(1), epsilon(1). CF(0) has three main subunits: a, b and c.

Its subcellular location is the cell membrane. In terms of biological role, produces ATP from ADP in the presence of a proton gradient across the membrane. The sequence is that of ATP synthase epsilon chain from Clostridium botulinum (strain 657 / Type Ba4).